Here is a 368-residue protein sequence, read N- to C-terminus: Probable endopolygalacturonase A (368 aa).

A signal peptide spans 1–18 (MRSVKLFGLAALGSLGAA). Residues 19 to 31 (APAPSRVSDLTKR) constitute a propeptide that is removed on maturation. A disulfide bond links C35 and C50. 7 PbH1 repeats span residues 140–162 (LEDSTITGLSIKNTPVQAISVQA), 167–192 (LIDITIDNSDGDDNGGHNTDGFDISE), 193–214 (STGVYIRGATVKNQDDCIAINS), 215–235 (GENIEFSGGTCSGGHGLSIGS), 244–265 (VKNVTITDSTVTDSANGVRIKT), 273–295 (VSQVTYSNIKLSGITDYGIVIEQ), and 307–352 (TTGV…DITG). The Proton donor role is filled by D207. C209 and C225 are disulfide-bonded. The active site involves H229. N-linked (GlcNAc...) asparagine glycosylation is present at N246. 2 disulfides stabilise this stretch: C335–C340 and C359–C368.

The protein belongs to the glycosyl hydrolase 28 family.

The protein localises to the secreted. The catalysed reaction is (1,4-alpha-D-galacturonosyl)n+m + H2O = (1,4-alpha-D-galacturonosyl)n + (1,4-alpha-D-galacturonosyl)m.. Its function is as follows. Involved in maceration and soft-rotting of plant tissue. Hydrolyzes the 1,4-alpha glycosidic bonds of de-esterified pectate in the smooth region of the plant cell wall. The protein is Probable endopolygalacturonase A (pgaA) of Aspergillus fumigatus (strain CBS 144.89 / FGSC A1163 / CEA10) (Neosartorya fumigata).